The primary structure comprises 337 residues: Palmitoyltransferase ZDHHC15 (337 aa).

Residues 1–20 (MRRGWKMALSGGLRCCRRVL) lie on the Cytoplasmic side of the membrane. A helical transmembrane segment spans residues 21-41 (SWVPVLVIVLVVLWSYYAYVF). Topologically, residues 42–56 (ELCLVTVLSPAEKVI) are lumenal. Residues 57 to 77 (YLILYHAIFVFFAWTYWKSIF) traverse the membrane as a helical segment. Topologically, residues 78 to 172 (TLPQQPNQKF…NNCIGFSNYK (95 aa)) are cytoplasmic. Residues 129 to 179 (RFCDRCHLIKPDRCHHCSVCAMCVLKMDHHCPWVNNCIGFSNYKFFLQFLA) enclose the DHHC domain. 7 residues coordinate Zn(2+): cysteine 131, cysteine 134, histidine 144, cysteine 145, cysteine 148, cysteine 151, and histidine 158. Cysteine 159 (S-palmitoyl cysteine intermediate) is an active-site residue. Cysteine 165 is a Zn(2+) binding site. Residues 173–193 (FFLQFLAYSVLYCLYIATTVF) traverse the membrane as a helical segment. The Lumenal segment spans residues 194–210 (SYFIKYWRGELPSVRSK). The helical transmembrane segment at 211-234 (FHVLFLLFVACMFFVSLVILFGYH) threads the bilayer. The Cytoplasmic portion of the chain corresponds to 235 to 337 (CWLVSRNKTT…LSSLAVESET (103 aa)). Residues 293–337 (HSFPMRSMNESQNPLLANEEPWEDNEDESQDYPEGLSSLAVESET) form a disordered region. Residues 312-323 (EPWEDNEDESQD) are compositionally biased toward acidic residues.

The protein belongs to the DHHC palmitoyltransferase family. Post-translationally, autopalmitoylated (in vitro). In brain, expressed in both excitatory and inhibitory neurons but not expressed by glial cells.

Its subcellular location is the golgi apparatus membrane. It localises to the postsynaptic density. The catalysed reaction is L-cysteinyl-[protein] + hexadecanoyl-CoA = S-hexadecanoyl-L-cysteinyl-[protein] + CoA. The enzyme catalyses L-cysteinyl-[protein] + tetradecanoyl-CoA = S-tetradecanoyl-L-cysteinyl-[protein] + CoA. It catalyses the reaction L-cysteinyl-[protein] + octadecanoyl-CoA = S-octadecanoyl-L-cysteinyl-[protein] + CoA. Palmitoyltransferase that catalyzes the addition of palmitate onto various protein substrates. Has no stringent fatty acid selectivity and in addition to palmitate can also transfer onto target proteins myristate from tetradecanoyl-CoA and stearate from octadecanoyl-CoA. Palmitoylates IGF2R and SORT1, promoting their partitioning to an endosomal membrane subdomain where they can interact with the retromer cargo-selective complex. Thereby, regulates retrograde transport from endosomes to the Golgi apparatus of these lysosomal sorting receptors and plays a role in trafficking of lysosomal proteins. In the nervous system, catalyzes the palmitoylation of DLG4/PSD95 and regulates its synaptic clustering and function in synaptogenesis. Could be involved in the differentiation of dopaminergic neurons and the development of the diencephalon. Could also catalyze the palmitoylation of GAP43. Could also palmitoylate DNAJC5 and regulate its localization to the Golgi membrane. Could also palmitoylate FYN as shown in vitro. May palmitoylate CALHM3 subunit of gustatory voltage-gated ion channels and modulate channel gating and kinetics. The polypeptide is Palmitoyltransferase ZDHHC15 (Rattus norvegicus (Rat)).